The chain runs to 415 residues: Gamma-glutamyl phosphate reductase (415 aa).

Belongs to the gamma-glutamyl phosphate reductase family.

It localises to the cytoplasm. It catalyses the reaction L-glutamate 5-semialdehyde + phosphate + NADP(+) = L-glutamyl 5-phosphate + NADPH + H(+). The protein operates within amino-acid biosynthesis; L-proline biosynthesis; L-glutamate 5-semialdehyde from L-glutamate: step 2/2. Catalyzes the NADPH-dependent reduction of L-glutamate 5-phosphate into L-glutamate 5-semialdehyde and phosphate. The product spontaneously undergoes cyclization to form 1-pyrroline-5-carboxylate. This chain is Gamma-glutamyl phosphate reductase, found in Carboxydothermus hydrogenoformans (strain ATCC BAA-161 / DSM 6008 / Z-2901).